A 555-amino-acid polypeptide reads, in one-letter code: Glutamate--tRNA ligase (555 aa).

Positions 100–110 (PNPSGPLHIGH) match the 'HIGH' region motif.

Belongs to the class-I aminoacyl-tRNA synthetase family. Glutamate--tRNA ligase type 2 subfamily.

The protein resides in the cytoplasm. It carries out the reaction tRNA(Glu) + L-glutamate + ATP = L-glutamyl-tRNA(Glu) + AMP + diphosphate. Catalyzes the attachment of glutamate to tRNA(Glu) in a two-step reaction: glutamate is first activated by ATP to form Glu-AMP and then transferred to the acceptor end of tRNA(Glu). The polypeptide is Glutamate--tRNA ligase (Methanococcus maripaludis (strain C6 / ATCC BAA-1332)).